The primary structure comprises 132 residues: Large ribosomal subunit protein bL20c (132 aa).

It belongs to the bacterial ribosomal protein bL20 family.

The protein resides in the plastid. It localises to the chloroplast. Its function is as follows. Binds directly to 23S ribosomal RNA and is necessary for the in vitro assembly process of the 50S ribosomal subunit. It is not involved in the protein synthesizing functions of that subunit. The polypeptide is Large ribosomal subunit protein bL20c (Coffea arabica (Arabian coffee)).